The following is a 195-amino-acid chain: HTH-type transcriptional regulator BetI (195 aa).

Positions 8 to 68 (SIRRRQLIDA…ATMRDITSQL (61 aa)) constitute an HTH tetR-type domain. A DNA-binding region (H-T-H motif) is located at residues 31–50 (TIAQIARRAGVSTGIISHYF).

It functions in the pathway amine and polyamine biosynthesis; betaine biosynthesis via choline pathway [regulation]. In terms of biological role, repressor involved in the biosynthesis of the osmoprotectant glycine betaine. It represses transcription of the choline transporter BetT and the genes of BetAB involved in the synthesis of glycine betaine. The protein is HTH-type transcriptional regulator BetI of Escherichia coli O8 (strain IAI1).